Here is an 806-residue protein sequence, read N- to C-terminus: Phosphatidylinositol 4-kinase beta (806 aa).

Residues 55–247 (LDKVKLIRGS…GTKLRKLILS (193 aa)) enclose the PIK helical domain. Disordered stretches follow at residues 69-104 (LDKI…SASR) and 253-310 (AHKK…DEPV). Positions 283-302 (DATVSISLSSNLKRTSSNPK) are enriched in polar residues. Positions 525–791 (EPWQEKVRRI…MVDGSMRSIT (267 aa)) constitute a PI3K/PI4K catalytic domain. Residues 531–537 (VRRIREG) are G-loop. Positions 658-666 (QVKDRHNGN) are catalytic loop. The segment at 677 to 701 (HIDFGFILSSSPRNLGFETSAFKLT) is activation loop.

Belongs to the PI3/PI4-kinase family. Type III PI4K subfamily. Mg(2+) is required as a cofactor. It depends on Mn(2+) as a cofactor.

It localises to the endomembrane system. Its subcellular location is the mitochondrion outer membrane. It is found in the rough endoplasmic reticulum membrane. It carries out the reaction a 1,2-diacyl-sn-glycero-3-phospho-(1D-myo-inositol) + ATP = a 1,2-diacyl-sn-glycero-3-phospho-(1D-myo-inositol 4-phosphate) + ADP + H(+). Phosphorylates phosphatidylinositol (PI) in the first committed step in the production of the second messenger inositol-1,4,5,-trisphosphate (PIP). May play an important role in the inner ear development. The chain is Phosphatidylinositol 4-kinase beta (pi4kb) from Xenopus tropicalis (Western clawed frog).